Consider the following 673-residue polypeptide: Armadillo repeat-containing protein 8 (673 aa).

ARM repeat units follow at residues 51–92 (NKQK…SLSM), 95–134 (ENNIKSLVDCHIIPALLQGLLCSDLIFIEACLRCLRTVFI), 138–176 (TPVQLLYTDPTVIPHLMSLLSRSQHTQEYITQIFAHCCK), 178–217 (PEHQTVLFNHGAIQNIAPLLISPSYKVRMQALKCFSVLAY), 225–265 (TLVN…YMCR), 269–309 (IRTE…YLME), 313–352 (ELQRIASVTDHLVSMLADYFKYPSSVSAITDIKRLDHDLK), 374–413 (DIRKKITETENMMDRIVSGLSESSIKVRLAAVRCLHSLSR), 416–455 (QQLRTSFHDHAVWKPLMKLLQNAPDEVLVMASSTLCNLLL), 458–497 (SPSKEPILESGVIELLCSLTQSDSSALRVNGIWALMNMAF), 501–540 (QKVKVEIVRALGTEQLFRLLSDPDTNVLMKTLGLLRNLLS), 543–585 (PHID…NIAD), 588–627 (TAKELIMTDDDMLQKIKYYMGHSNVKLQLAATFCISNLIW), and 634–673 (QERQDKLREMGFVDILHKLTQASDPDLCDRAKTAMQQYLA).

In terms of assembly, identified in the CTLH complex that contains at least MAEA, RMND5A (or alternatively its paralog RMND5B), GID8, WDR26, and RANBP9 and/or RANBP10; ARMC8 has an ancillary role in the complex.

It is found in the nucleus. The protein localises to the cytoplasm. Functionally, component of the CTLH E3 ubiquitin-protein ligase complex that mediates ubiquitination and subsequent proteasomal degradation of target proteins. This chain is Armadillo repeat-containing protein 8 (armc8), found in Danio rerio (Zebrafish).